Here is a 243-residue protein sequence, read N- to C-terminus: Endochitinase (243 aa).

Cystine bridges form between Cys-23–Cys-85, Cys-97–Cys-105, and Cys-223–Cys-236. Residue Glu-67 is the Proton donor of the active site.

Its subcellular location is the vacuole. The enzyme catalyses Random endo-hydrolysis of N-acetyl-beta-D-glucosaminide (1-&gt;4)-beta-linkages in chitin and chitodextrins.. In terms of biological role, defense against chitin-containing fungal pathogens. Shows activity on chitin, tetra-N-acetylglucosamine and chitosan. The polypeptide is Endochitinase (Carica papaya (Papaya)).